The primary structure comprises 117 residues: Acylphosphatase (117 aa).

Residues 31–117 (RWRWIIQGQV…RGDDWFEVRY (87 aa)) form the Acylphosphatase-like domain. Residues arginine 46 and asparagine 64 contribute to the active site.

The protein belongs to the acylphosphatase family.

It carries out the reaction an acyl phosphate + H2O = a carboxylate + phosphate + H(+). The polypeptide is Acylphosphatase (acyP) (Synechococcus sp. (strain CC9902)).